We begin with the raw amino-acid sequence, 732 residues long: Elongation factor 2 (732 aa).

The region spanning 19–228 is the tr-type G domain; that stretch reads ELIRNIGIVA…TKITFKDIVE (210 aa). GTP-binding positions include 28–35, 94–98, and 148–151; these read AHIDHGKT, DTPGH, and NKID. H598 is modified (diphthamide).

Belongs to the TRAFAC class translation factor GTPase superfamily. Classic translation factor GTPase family. EF-G/EF-2 subfamily.

It localises to the cytoplasm. Catalyzes the GTP-dependent ribosomal translocation step during translation elongation. During this step, the ribosome changes from the pre-translocational (PRE) to the post-translocational (POST) state as the newly formed A-site-bound peptidyl-tRNA and P-site-bound deacylated tRNA move to the P and E sites, respectively. Catalyzes the coordinated movement of the two tRNA molecules, the mRNA and conformational changes in the ribosome. The protein is Elongation factor 2 (fusA) of Thermoplasma acidophilum (strain ATCC 25905 / DSM 1728 / JCM 9062 / NBRC 15155 / AMRC-C165).